The chain runs to 65 residues: UPF0291 protein BBR47_33060 (65 aa).

This sequence belongs to the UPF0291 family.

It is found in the cytoplasm. In Brevibacillus brevis (strain 47 / JCM 6285 / NBRC 100599), this protein is UPF0291 protein BBR47_33060.